A 146-amino-acid chain; its full sequence is Tol-Pal system protein TolR (146 aa).

Residues 16–36 form a helical membrane-spanning segment; that stretch reads VVPYIDVMLVLLVIFMVTAPM.

The protein belongs to the ExbD/TolR family. As to quaternary structure, the Tol-Pal system is composed of five core proteins: the inner membrane proteins TolA, TolQ and TolR, the periplasmic protein TolB and the outer membrane protein Pal. They form a network linking the inner and outer membranes and the peptidoglycan layer.

The protein localises to the cell inner membrane. Its function is as follows. Part of the Tol-Pal system, which plays a role in outer membrane invagination during cell division and is important for maintaining outer membrane integrity. The chain is Tol-Pal system protein TolR from Pseudomonas aeruginosa (strain ATCC 15692 / DSM 22644 / CIP 104116 / JCM 14847 / LMG 12228 / 1C / PRS 101 / PAO1).